Consider the following 91-residue polypeptide: UPF0223 protein SAB0963 (91 aa).

The protein belongs to the UPF0223 family.

The sequence is that of UPF0223 protein SAB0963 from Staphylococcus aureus (strain bovine RF122 / ET3-1).